The primary structure comprises 253 residues: Triosephosphate isomerase (253 aa).

9–11 (NWK) is a substrate binding site. His94 serves as the catalytic Electrophile. Glu163 (proton acceptor) is an active-site residue. Residues Gly169, Ser209, and 230–231 (GG) each bind substrate.

This sequence belongs to the triosephosphate isomerase family. As to quaternary structure, homodimer.

It localises to the cytoplasm. It catalyses the reaction D-glyceraldehyde 3-phosphate = dihydroxyacetone phosphate. It functions in the pathway carbohydrate biosynthesis; gluconeogenesis. It participates in carbohydrate degradation; glycolysis; D-glyceraldehyde 3-phosphate from glycerone phosphate: step 1/1. Functionally, involved in the gluconeogenesis. Catalyzes stereospecifically the conversion of dihydroxyacetone phosphate (DHAP) to D-glyceraldehyde-3-phosphate (G3P). This Dehalococcoides mccartyi (strain CBDB1) protein is Triosephosphate isomerase.